The sequence spans 630 residues: 1-deoxy-D-xylulose-5-phosphate synthase (630 aa).

Thiamine diphosphate-binding positions include histidine 72 and 113–115 (GHS). Aspartate 144 is a binding site for Mg(2+). Residues 145–146 (GA), asparagine 173, tyrosine 284, and glutamate 367 each bind thiamine diphosphate. Asparagine 173 contributes to the Mg(2+) binding site.

This sequence belongs to the transketolase family. DXPS subfamily. As to quaternary structure, homodimer. Mg(2+) is required as a cofactor. Requires thiamine diphosphate as cofactor.

The enzyme catalyses D-glyceraldehyde 3-phosphate + pyruvate + H(+) = 1-deoxy-D-xylulose 5-phosphate + CO2. Its pathway is metabolic intermediate biosynthesis; 1-deoxy-D-xylulose 5-phosphate biosynthesis; 1-deoxy-D-xylulose 5-phosphate from D-glyceraldehyde 3-phosphate and pyruvate: step 1/1. Catalyzes the acyloin condensation reaction between C atoms 2 and 3 of pyruvate and glyceraldehyde 3-phosphate to yield 1-deoxy-D-xylulose-5-phosphate (DXP). The sequence is that of 1-deoxy-D-xylulose-5-phosphate synthase from Bacillus cereus (strain ATCC 10987 / NRS 248).